A 475-amino-acid chain; its full sequence is 3-isopropylmalate dehydratase large subunit 1 (475 aa).

C353, C413, and C416 together coordinate [4Fe-4S] cluster.

The protein belongs to the aconitase/IPM isomerase family. LeuC type 1 subfamily. As to quaternary structure, heterodimer of LeuC and LeuD. Requires [4Fe-4S] cluster as cofactor.

It catalyses the reaction (2R,3S)-3-isopropylmalate = (2S)-2-isopropylmalate. The protein operates within amino-acid biosynthesis; L-leucine biosynthesis; L-leucine from 3-methyl-2-oxobutanoate: step 2/4. Its function is as follows. Catalyzes the isomerization between 2-isopropylmalate and 3-isopropylmalate, via the formation of 2-isopropylmaleate. This Mannheimia succiniciproducens (strain KCTC 0769BP / MBEL55E) protein is 3-isopropylmalate dehydratase large subunit 1.